The following is a 218-amino-acid chain: Phosphoribosylformylglycinamidine synthase subunit PurQ (218 aa).

In terms of domain architecture, Glutamine amidotransferase type-1 spans 2-218 (RVGVIRFPGS…FFRGILKFRG (217 aa)). Cysteine 85 (nucleophile) is an active-site residue. Residues histidine 192 and glutamate 194 contribute to the active site.

In terms of assembly, part of the FGAM synthase complex composed of 1 PurL, 1 PurQ and 2 PurS subunits.

It is found in the cytoplasm. The enzyme catalyses N(2)-formyl-N(1)-(5-phospho-beta-D-ribosyl)glycinamide + L-glutamine + ATP + H2O = 2-formamido-N(1)-(5-O-phospho-beta-D-ribosyl)acetamidine + L-glutamate + ADP + phosphate + H(+). It catalyses the reaction L-glutamine + H2O = L-glutamate + NH4(+). The protein operates within purine metabolism; IMP biosynthesis via de novo pathway; 5-amino-1-(5-phospho-D-ribosyl)imidazole from N(2)-formyl-N(1)-(5-phospho-D-ribosyl)glycinamide: step 1/2. Functionally, part of the phosphoribosylformylglycinamidine synthase complex involved in the purines biosynthetic pathway. Catalyzes the ATP-dependent conversion of formylglycinamide ribonucleotide (FGAR) and glutamine to yield formylglycinamidine ribonucleotide (FGAM) and glutamate. The FGAM synthase complex is composed of three subunits. PurQ produces an ammonia molecule by converting glutamine to glutamate. PurL transfers the ammonia molecule to FGAR to form FGAM in an ATP-dependent manner. PurS interacts with PurQ and PurL and is thought to assist in the transfer of the ammonia molecule from PurQ to PurL. This chain is Phosphoribosylformylglycinamidine synthase subunit PurQ, found in Methanothermobacter thermautotrophicus (strain ATCC 29096 / DSM 1053 / JCM 10044 / NBRC 100330 / Delta H) (Methanobacterium thermoautotrophicum).